Consider the following 508-residue polypeptide: Glucose-1-phosphate adenylyltransferase small subunit 1, chloroplastic (508 aa).

The segment at 1 to 27 (MSSIVTSGVINVPRSSSSSKNLSFSSS) is disordered. A chloroplast-targeting transit peptide spans 1–59 (MSSIVTSGVINVPRSSSSSKNLSFSSSSQLSGNKILTVSGNGAPRGRCTLKHVFLTPKA). Positions 15–27 (SSSSSKNLSFSSS) are enriched in low complexity.

This sequence belongs to the bacterial/plant glucose-1-phosphate adenylyltransferase family. Heterotetramer. As to expression, seeds.

The protein localises to the plastid. Its subcellular location is the chloroplast. The enzyme catalyses alpha-D-glucose 1-phosphate + ATP + H(+) = ADP-alpha-D-glucose + diphosphate. Its pathway is glycan biosynthesis; starch biosynthesis. Activated by 3'phosphoglycerate, inhibited by orthophosphate. Allosteric regulation. Its function is as follows. This protein plays a role in synthesis of starch. It catalyzes the synthesis of the activated glycosyl donor, ADP-glucose from Glc-1-P and ATP. The chain is Glucose-1-phosphate adenylyltransferase small subunit 1, chloroplastic (AGPC) from Vicia faba (Broad bean).